The chain runs to 1043 residues: Glutamate receptor ionotropic, NMDA 3B (1043 aa).

The signal sequence occupies residues 1 to 22 (MEFVRALWLGLALALGPGSAGG). The Extracellular segment spans residues 23-574 (HPQPCGVLAR…PIGAFMWPLH (552 aa)). N-linked (GlcNAc...) asparagine glycosylation is found at N69, N344, N451, and N465. 2 disulfide bridges follow: C439-C475 and C445-C476. Residues S531, S533, and R538 each coordinate glycine. S533 and R538 together coordinate D-serine. A helical transmembrane segment spans residues 575 to 594 (WSTWLGVFAALHLTALFLTV). Topologically, residues 595-615 (YEWRSPYGLTPRGRNRSTVFS) are cytoplasmic. The segment at residues 616–627 (YSSALNLCYAIL) is an intramembrane region (discontinuously helical). Over 628–641 (FRRTVSSKTPKCPT) the chain is Cytoplasmic. A helical transmembrane segment spans residues 642-661 (GRLLMNLWAIFCLLVLSSYT). Residues 662 to 832 (ANLAAVMVGD…TLQMSIYHFA (171 aa)) are Extracellular-facing. Position 701 (S701) interacts with glycine. Residues S701, A702, and D745 each contribute to the D-serine site. D745 is a glycine binding site. N-linked (GlcNAc...) asparagine glycosylation is present at N786. Residues 833 to 848 (GLFVLLCLGLGSALLS) traverse the membrane as a helical segment. Residues 849–1043 (SLGEHAFFRL…PHSGRPGSQE (195 aa)) lie on the Cytoplasmic side of the membrane. Disordered regions lie at residues 882–924 (ALNT…WKRA) and 1012–1043 (GDSARHRPRRLLQARAAPAEAPPHSGRPGSQE). Residues 979-1012 (QPGELQELERRIEVARERLRQALVRRGQLLAQLG) are involved in the trafficking and surface expression of NMDARs. A compositionally biased stretch (low complexity) spans 1024 to 1035 (QARAAPAEAPPH).

The protein belongs to the glutamate-gated ion channel (TC 1.A.10.1) family. NR3B/GRIN3B subfamily. In terms of assembly, forms heterotetrameric channels that contain at least two GluN1 subunits and at least a combination of one GluN2 and one GluN3 subunits (in vitro). Forms heterotetrameric channels composed of two GluN1/zeta subunits (GRIN1), and two identical GluN3 subunits (GRIN3A or GRIN3B) (in vitro). Does not form functional homomeric channels.

The protein resides in the cell membrane. It is found in the postsynaptic cell membrane. The enzyme catalyses Ca(2+)(in) = Ca(2+)(out). It carries out the reaction Na(+)(in) = Na(+)(out). Functionally, component of a non-conventional N-methyl-D-aspartate (NMDA) receptors (NMDARs) that function as heterotetrameric, ligand-gated cation channels with low calcium permeability and low voltage-dependent block by Mg(2+). Forms glutamatergic receptor complexes with GluN1 and GluN2 subunits which are activated by glycine binding to the GluN1 and GluN3 subunits and L-glutamate binding to GluN2 subunits. Forms excitatory glycinergic receptor complexes with GluN1 alone which are activated by glycine binding to the GluN1 and GluN3 subunits. GluN3B subunit also binds D-serine and, in the absence of glycine, activates glycinergic receptor complexes, but with lower efficacy than glycine. Each GluN3 subunit confers differential attributes to channel properties, including activation, deactivation and desensitization kinetics, pH sensitivity, Ca2(+) permeability, and binding to allosteric modulators. The polypeptide is Glutamate receptor ionotropic, NMDA 3B (Homo sapiens (Human)).